The following is a 497-amino-acid chain: Probable FAD-binding monooxygenase AlmA (497 aa).

A helical transmembrane segment spans residues Q4–S24. Residues S15, E36, D56, F62, and V104 each contribute to the FAD site. R54–D56 is a binding site for NADP(+). NADP(+) contacts are provided by residues S184–T190, R208–S209, and R292–L293. Position 395 (V395) interacts with FAD.

This sequence belongs to the FAD-binding monooxygenase family. FAD is required as a cofactor.

Its subcellular location is the cell membrane. It participates in hydrocarbon metabolism; alkane degradation. Its function is as follows. Is involved in the degradation of n-alkanes with C chain lengths of 32 and longer. Allows Acinetobacter sp. strain DSM 17874 to grow on long-chain n-alkanes such as dotriacontane (C32H66) or hexatriacontane (C36H74) as a sole carbon source. This Acinetobacter sp protein is Probable FAD-binding monooxygenase AlmA.